We begin with the raw amino-acid sequence, 180 residues long: Protein SPMIP9 (180 aa).

Microtubule inner protein component of sperm flagellar doublet microtubules.

The protein localises to the nucleus. It is found in the cytoplasm. It localises to the cytoskeleton. Its subcellular location is the flagellum axoneme. In terms of biological role, microtubule inner protein (MIP) part of the dynein-decorated doublet microtubules (DMTs) in flagella axoneme. The sequence is that of Protein SPMIP9 (SPMIP9) from Bos taurus (Bovine).